Consider the following 245-residue polypeptide: 8-amino-3,8-dideoxy-manno-octulosonate cytidylyltransferase (245 aa).

The protein belongs to the KdsB family.

It localises to the cytoplasm. The enzyme catalyses 8-amino-3,8-dideoxy-alpha-D-manno-octulosonate + CTP = CMP-8-amino-3,8-dideoxy-alpha-D-manno-oct-2-ulosonate + diphosphate. Its pathway is bacterial outer membrane biogenesis; lipopolysaccharide biosynthesis. In terms of biological role, activates KDO8N (a required 8-carbon sugar) for incorporation into bacterial lipopolysaccharide in the Shewanella genus. The polypeptide is 8-amino-3,8-dideoxy-manno-octulosonate cytidylyltransferase (Shewanella baltica (strain OS185)).